The following is a 426-amino-acid chain: MSKSENLYSAARELIPGGVNSPVRAFTGVGGTPLFIEKADGAYLYDVDGKAYIDYVGSWGPMVLGHNHPAIRNAVIEAAERGLSFGAPTEMEVKMAELVTNLVPTMDMVRMVNSGTEATMSAIRLARGFTGRDKIIKFEGCYHGHADCLLVKAGSGALTLGQPNSPGVPADFAKHTLTCTYNDLTSVRAAFEQYPQEIACIIVEPVAGNMNCVPPLPEFLPGLRALCDEFGALLIIDEVMTGFRVALAGAQDYYGVVPDLTCLGKIIGGGMPVGAFGGRRDVMDALAPTGPVYQAGTLSGNPIAMAAGFACLNEVAQPGIHETLDELTTRLAEGLCEAAQEAGIPLVVNHVGGMFGIFFTDAESVTCYQDVMACDVERFKRFFHLMLEEGVYLAPSAFEAGFMSVAHSMDDINNTIDAARRVFATL.

Residue K265 is modified to N6-(pyridoxal phosphate)lysine.

It belongs to the class-III pyridoxal-phosphate-dependent aminotransferase family. HemL subfamily. Homodimer. Pyridoxal 5'-phosphate serves as cofactor.

It is found in the cytoplasm. It catalyses the reaction (S)-4-amino-5-oxopentanoate = 5-aminolevulinate. It participates in porphyrin-containing compound metabolism; protoporphyrin-IX biosynthesis; 5-aminolevulinate from L-glutamyl-tRNA(Glu): step 2/2. This is Glutamate-1-semialdehyde 2,1-aminomutase from Salmonella heidelberg (strain SL476).